We begin with the raw amino-acid sequence, 872 residues long: Eukaryotic translation initiation factor 3 subunit C (872 aa).

The interval 1 to 100 is disordered; it reads MSRFFRGGDD…KVKSAKDKRF (100 aa). 2 stretches are compositionally biased toward acidic residues: residues 16 to 59 and 72 to 87; these read SSEE…DEEE and SDDE…SDDE. The span at 88 to 100 shows a compositional bias: basic and acidic residues; it reads ATTKVKSAKDKRF. The 175-residue stretch at 613 to 787 folds into the PCI domain; that stretch reads FHMHINLELL…ETVIFRKGVE (175 aa). Residues 812-872 are disordered; the sequence is TLEQKTQGSA…GGALGNAVRG (61 aa). The span at 831–848 shows a compositional bias: gly residues; that stretch reads GGGQRGGGQRGGRGGART.

This sequence belongs to the eIF-3 subunit C family. Component of the eukaryotic translation initiation factor 3 (eIF-3) complex.

It localises to the cytoplasm. Functionally, component of the eukaryotic translation initiation factor 3 (eIF-3) complex, which is involved in protein synthesis of a specialized repertoire of mRNAs and, together with other initiation factors, stimulates binding of mRNA and methionyl-tRNAi to the 40S ribosome. The eIF-3 complex specifically targets and initiates translation of a subset of mRNAs involved in cell proliferation. In Neurospora crassa (strain ATCC 24698 / 74-OR23-1A / CBS 708.71 / DSM 1257 / FGSC 987), this protein is Eukaryotic translation initiation factor 3 subunit C (nip-1).